A 593-amino-acid chain; its full sequence is ESX-1 secretion system protein EccCb1 (593 aa).

FtsK domains follow at residues 66 to 260 (RQEV…NETQ) and 350 to 546 (QVPL…EKND). ATP-binding positions include 85-92 (GAPQTGKS) and 377-384 (GAPKSGKT).

As to quaternary structure, part of the ESX-1 / type VII secretion system (T7SS), which is composed of cytosolic and membrane components. The ESX-1 membrane complex is composed of EccB1, EccCa1, EccCb1, EccD1 and EccE1.

It is found in the cytoplasm. Its function is as follows. Part of the ESX-1 / type VII specialized secretion system (T7SS), which exports several proteins including EsxA and EsxB. Plays a role in DNA conjugation, in both donor and recipient strains. The protein is ESX-1 secretion system protein EccCb1 (eccCb1) of Mycolicibacterium smegmatis (strain MKD8) (Mycobacterium smegmatis).